The primary structure comprises 179 residues: Bifunctional protein PyrR (179 aa).

The short motif at 99 to 111 (VILVDDVLYTGRT) is the PRPP-binding element.

This sequence belongs to the purine/pyrimidine phosphoribosyltransferase family. PyrR subfamily. In terms of assembly, homodimer and homohexamer; in equilibrium.

The catalysed reaction is UMP + diphosphate = 5-phospho-alpha-D-ribose 1-diphosphate + uracil. Its function is as follows. Regulates transcriptional attenuation of the pyrimidine nucleotide (pyr) operon by binding in a uridine-dependent manner to specific sites on pyr mRNA. This disrupts an antiterminator hairpin in the RNA and favors formation of a downstream transcription terminator, leading to a reduced expression of downstream genes. Also displays a weak uracil phosphoribosyltransferase activity which is not physiologically significant. This is Bifunctional protein PyrR from Limosilactobacillus fermentum (strain NBRC 3956 / LMG 18251) (Lactobacillus fermentum).